Consider the following 384-residue polypeptide: Tryptophan--tRNA ligase (384 aa).

The 'HIGH' region signature appears at 81–89 (PSGPMHIGH). The 'KMSKS' region motif lies at 252–256 (KMSAS).

The protein belongs to the class-I aminoacyl-tRNA synthetase family.

It localises to the cytoplasm. It carries out the reaction tRNA(Trp) + L-tryptophan + ATP = L-tryptophyl-tRNA(Trp) + AMP + diphosphate + H(+). In Thermococcus onnurineus (strain NA1), this protein is Tryptophan--tRNA ligase.